The following is a 474-amino-acid chain: GTPase Der (474 aa).

2 EngA-type G domains span residues 3 to 167 and 204 to 379; these read LTIA…GSER and IRIA…RVWN. Residues 9–16, 56–60, 119–122, 210–217, 257–261, and 322–325 contribute to the GTP site; these read GRPNVGKS, DTAGL, NKSE, GRPNTGKS, and NKWD. A KH-like domain is found at 380-464; that stretch reads RRISTAKLNQ…PVRLSLRASD (85 aa).

This sequence belongs to the TRAFAC class TrmE-Era-EngA-EngB-Septin-like GTPase superfamily. EngA (Der) GTPase family. Associates with the 50S ribosomal subunit.

Its function is as follows. GTPase that plays an essential role in the late steps of ribosome biogenesis. This is GTPase Der from Bartonella tribocorum (strain CIP 105476 / IBS 506).